A 309-amino-acid polypeptide reads, in one-letter code: HPr kinase/phosphorylase (309 aa).

Active-site residues include His-138 and Lys-159. An ATP-binding site is contributed by 153–160; sequence GQSGVGKS. Ser-160 provides a ligand contact to Mg(2+). Asp-177 (proton acceptor; for phosphorylation activity. Proton donor; for dephosphorylation activity) is an active-site residue. Residues 201 to 210 are important for the catalytic mechanism of both phosphorylation and dephosphorylation; that stretch reads LEIRGLGIIN. Glu-202 lines the Mg(2+) pocket. The active site involves Arg-243. The tract at residues 264–269 is important for the catalytic mechanism of dephosphorylation; sequence PVRPGR.

The protein belongs to the HPrK/P family. Homohexamer. It depends on Mg(2+) as a cofactor.

The catalysed reaction is [HPr protein]-L-serine + ATP = [HPr protein]-O-phospho-L-serine + ADP + H(+). It carries out the reaction [HPr protein]-O-phospho-L-serine + phosphate + H(+) = [HPr protein]-L-serine + diphosphate. Catalyzes the ATP- as well as the pyrophosphate-dependent phosphorylation of a specific serine residue in HPr, a phosphocarrier protein of the phosphoenolpyruvate-dependent sugar phosphotransferase system (PTS). HprK/P also catalyzes the pyrophosphate-producing, inorganic phosphate-dependent dephosphorylation (phosphorolysis) of seryl-phosphorylated HPr (P-Ser-HPr). The two antagonistic activities of HprK/P are regulated by several intracellular metabolites, which change their concentration in response to the absence or presence of rapidly metabolisable carbon sources (glucose, fructose, etc.) in the growth medium. Also phosphorylates/dephosphorylates the HPr-like catabolite repression protein crh on a specific serine residue. Therefore, by controlling the phosphorylation state of HPr and crh, HPrK/P is a sensor enzyme that plays a major role in the regulation of carbon metabolism and sugar transport: it mediates carbon catabolite repression (CCR), and regulates PTS-catalyzed carbohydrate uptake and inducer exclusion. This is HPr kinase/phosphorylase from Bacillus anthracis (strain A0248).